The primary structure comprises 367 residues: Pre-small/secreted glycoprotein (367 aa).

An N-terminal signal peptide occupies residues 1 to 33 (MGSGYQLLQLPRERFRKTSFLVWVIILFQRAIS). A glycan (N-linked (GlcNAc...) asparagine; by host) is linked at Asn41. 2 disulfide bridges follow: Cys109/Cys136 and Cys122/Cys148. 4 N-linked (GlcNAc...) asparagine; by host glycosylation sites follow: Asn205, Asn239, Asn258, and Asn269.

The protein belongs to the filoviruses glycoprotein family. In terms of assembly, homodimer; disulfide-linked. The homodimers are linked by two disulfide bonds in a parallel orientation. Monomer. Post-translationally, this precursor is processed into mature sGP and delta-peptide by host furin or furin-like proteases. The cleavage site corresponds to the furin optimal cleavage sequence [KR]-X-[KR]-R. N-glycosylated. In terms of processing, O-glycosylated.

Its subcellular location is the secreted. Seems to possess an anti-inflammatory activity as it can reverse the barrier-decreasing effects of TNF alpha. Might therefore contribute to the lack of inflammatory reaction seen during infection in spite the of extensive necrosis and massive virus production. Does not seem to be involved in activation of primary macrophages. Does not seem to interact specifically with neutrophils. Functionally, viroporin that permeabilizes mammalian cell plasma membranes. It acts by altering permeation of ionic compounds and small molecules. This activity may lead to viral enterotoxic activity. This is Pre-small/secreted glycoprotein (GP) from Reston ebolavirus (strain Philippines-96) (REBOV).